The sequence spans 261 residues: MTNKYLSFITDEDLFECIEFLYTEYEKALEGIDFDKFFKNRIDTFKMTFDMGINNLSEQDWLAAELQRQVEKTITNHVGTFHEKLIGKIEGYTNYPVGYDYDVAKDDNTLFAEIKNKHNTLTGTHTKSLFQKICGYAEKYPDAICYYVRIIDTKSRNDIWEFRSGSIDENTREKPRFSHPRVRIASGDQFYKIVTGEEDAFKQLAYNIPIALDDWIETKRAKKGSSLGLFAELYQQAKANNRTLSEEIISINYPKSNYISF.

In terms of assembly, monomer.

It catalyses the reaction Endonucleolytic cleavage of DNA to give specific double-stranded fragments with terminal 5'-phosphates.. Functionally, a P subtype restriction enzyme that recognizes the double-stranded sequence 5'-GGNCC-3' and cleaves after G-1. This is Type II restriction enzyme Sau96I from Staphylococcus aureus.